A 453-amino-acid polypeptide reads, in one-letter code: Glutamate-rich protein 5 (453 aa).

Disordered stretches follow at residues Met1–Arg38, Asn66–Ala377, and Thr394–Leu453. Residues Ala11–Thr21 are compositionally biased toward basic and acidic residues. Position 155 is a phosphoserine (Ser155). Composition is skewed to polar residues over residues Leu230–Leu243 and Gln271–Arg283. Composition is skewed to basic and acidic residues over residues Glu305–Gly332, Ile364–Glu374, and Thr394–Gly403. Positions Glu404–Met413 are enriched in acidic residues. Positions Glu414–Thr424 are enriched in basic and acidic residues.

The sequence is that of Glutamate-rich protein 5 (ERICH5) from Bos taurus (Bovine).